Here is an 838-residue protein sequence, read N- to C-terminus: uncharacterized protein (838 aa).

This is an uncharacterized protein from Rickettsia conorii (strain ATCC VR-613 / Malish 7).